Here is a 257-residue protein sequence, read N- to C-terminus: UPF0246 protein ACICU_02469 (257 aa).

This sequence belongs to the UPF0246 family.

This chain is UPF0246 protein ACICU_02469, found in Acinetobacter baumannii (strain ACICU).